We begin with the raw amino-acid sequence, 327 residues long: Sideroflexin-2 (327 aa).

5 consecutive transmembrane segments (helical) span residues 99–119 (GMLI…VVLW), 143–163 (VTQL…AAIG), 175–195 (LFQR…NIPL), 228–248 (EVVV…PLIM), and 267–287 (FQTL…CALF).

It belongs to the sideroflexin family.

It localises to the mitochondrion membrane. The catalysed reaction is L-serine(in) = L-serine(out). Mitochondrial amino-acid transporter that mediates transport of serine into mitochondria. This chain is Sideroflexin-2, found in Drosophila melanogaster (Fruit fly).